A 283-amino-acid chain; its full sequence is Acyl-coenzyme A diphosphatase FITM2 (283 aa).

A compositionally biased stretch (low complexity) spans 1-11 (MSTRRSSTRAD). The interval 1–21 (MSTRRSSTRADSTTKRPASPN) is disordered. Residues 1-39 (MSTRRSSTRADSTTKRPASPNSTPNAALGIFVAIARQIL) are Cytoplasmic-facing. The helical transmembrane segment at 40 to 60 (FIDARKVALFYLAFVTVLSFI) threads the bilayer. Over 61-81 (ESRIELDSTYYLVQKHSVLNQ) the chain is Lumenal. The helical transmembrane segment at 82–102 (YGVKMGWFWTLVIVGPFIWFS) threads the bilayer. Over 103–120 (SKAHNRRDRDQPIVDVCR) the chain is Cytoplasmic. Residues 121 to 141 (LGVGTACWYFSVQFFHKVLAL) traverse the membrane as a helical segment. The Lumenal segment spans residues 142–168 (TSMCDKGRTLTRAQCSEKEGVWTPGYD). A helical membrane pass occupies residues 169–189 (ISGHCFLMIYSILIITEEAIA). Residue histidine 172 is part of the active site. Residues 190–219 (YRHYQQVTDAVHQMDGDREEHDRLTRCIQY) are Cytoplasmic-facing. Transmembrane regions (helical) follow at residues 220–240 (FFVA…ISVL) and 241–261 (YYHI…CWFV). The active site involves histidine 243. The Cytoplasmic segment spans residues 262–283 (TYRMLYPAGFLASPIRRTVGRK).

It belongs to the FIT family. FIT2 subfamily.

Its subcellular location is the endoplasmic reticulum membrane. It catalyses the reaction an acyl-CoA + H2O = an acyl-4'-phosphopantetheine + adenosine 3',5'-bisphosphate + 2 H(+). In terms of biological role, fatty acyl-coenzyme A (CoA) diphosphatase that hydrolyzes fatty acyl-CoA to yield acyl-4'-phosphopantetheine and adenosine 3',5'-bisphosphate. Preferentially hydrolyzes unsaturated long-chain acyl-CoA substrates in the endoplasmic reticulum (ER) lumen. This catalytic activity is required for maintaining ER structure and for lipid droplets (LDs) biogenesis, which are lipid storage organelles involved in maintaining lipid and energy homeostasis. May directly bind to diacylglycerol (DAGs) and triacylglycerol, which is also important for LD biogenesis. May support directional budding of nacent LDs from the ER into the cytosol by reducing DAG levels at sites of LD formation. May play a role in the regulation of cell morphology, ER morphology and cytoskeletal organization. This chain is Acyl-coenzyme A diphosphatase FITM2, found in Caenorhabditis elegans.